Consider the following 389-residue polypeptide: Transcription factor TGAL10 (389 aa).

Positions 80–110 are disordered; the sequence is DDQDNAAALQESPRHASDSFEQEASKPRDKI. Residues 91-110 are compositionally biased toward basic and acidic residues; it reads SPRHASDSFEQEASKPRDKI. Residues 107 to 151 enclose the bZIP domain; the sequence is RDKIQRRLAQNREAARKSRLRKKAYIQNLETSRMKLAHLEQEITR. The segment at 109-129 is basic motif; the sequence is KIQRRLAQNREAARKSRLRKK. Residues 135–149 form a leucine-zipper region; it reads LETSRMKLAHLEQEI. The 214-residue stretch at 176–389 folds into the DOG1 domain; sequence VVTFEVEYAQ…LHVRRRAELG (214 aa). Disordered regions lie at residues 320–345 and 370–389; these read TSCDASPPPPPPEEEEPSSSAAGDGG and HRRSPPPTSHLHVRRRAELG. A compositionally biased stretch (basic residues) spans 380 to 389; the sequence is LHVRRRAELG.

This sequence belongs to the bZIP family.

The protein resides in the nucleus. Transcriptional regulator involved in defense response. The chain is Transcription factor TGAL10 from Oryza sativa subsp. japonica (Rice).